Reading from the N-terminus, the 293-residue chain is Aspartate carbamoyltransferase catalytic subunit (293 aa).

Positions 50 and 51 each coordinate carbamoyl phosphate. Position 78 (K78) interacts with L-aspartate. 3 residues coordinate carbamoyl phosphate: R100, H127, and Q130. Residues R160 and R210 each coordinate L-aspartate. Residues A253 and P254 each contribute to the carbamoyl phosphate site.

Belongs to the aspartate/ornithine carbamoyltransferase superfamily. ATCase family. Heterododecamer (2C3:3R2) of six catalytic PyrB chains organized as two trimers (C3), and six regulatory PyrI chains organized as three dimers (R2).

The enzyme catalyses carbamoyl phosphate + L-aspartate = N-carbamoyl-L-aspartate + phosphate + H(+). The protein operates within pyrimidine metabolism; UMP biosynthesis via de novo pathway; (S)-dihydroorotate from bicarbonate: step 2/3. Functionally, catalyzes the condensation of carbamoyl phosphate and aspartate to form carbamoyl aspartate and inorganic phosphate, the committed step in the de novo pyrimidine nucleotide biosynthesis pathway. The sequence is that of Aspartate carbamoyltransferase catalytic subunit from Staphylococcus aureus (strain USA300).